The sequence spans 86 residues: Serine protease inhibitor Kazal-type 4 (86 aa).

The signal sequence occupies residues 1–26 (MAVRLWVVALALAALFIVDREVPVSA). The 56-residue stretch at 31–86 (FSRMPICEHMTESPDCSRIYDPVCGTDGVTYESECKLCLARIENKQDIQIVKDGEC) folds into the Kazal-like domain. 3 disulfide bridges follow: Cys-37–Cys-68, Cys-46–Cys-65, and Cys-54–Cys-86.

Synthesized in duodenal goblet cells and in monocytes in bone marrow and blood.

The protein resides in the secreted. Inhibits the glucose-induced insulin secretion from perfused pancreas; also plays a role in the immune system. Does not inhibit trypsin. The chain is Serine protease inhibitor Kazal-type 4 (SPINK4) from Sus scrofa (Pig).